The chain runs to 272 residues: HTH-type transcriptional repressor AllR (272 aa).

The segment at 1–20 is disordered; sequence MTEVRRRGRPGQAEPTAQKG. The HTH iclR-type domain occupies 21 to 83; that stretch reads AQALERGIAI…SQLGWWHIGL (63 aa). Residues 43–62 constitute a DNA-binding region (H-T-H motif); that stretch reads VSDISGSLDLPLSTTFRLLK. Positions 98–267 constitute an IclR-ED domain; that stretch reads VLSVAGPFMH…AKDISTALGL (170 aa). Glyoxylate-binding positions include 154–156, D207, C217, and 234–236; these read SGA and SIS.

Negative regulator of allantoin and glyoxylate utilization operons. Binds to the gcl promoter and to the allS-allA intergenic region. The chain is HTH-type transcriptional repressor AllR (allR) from Salmonella typhi.